The chain runs to 295 residues: Elongation factor Ts (295 aa).

The interval 79–82 (TDFV) is involved in Mg(2+) ion dislocation from EF-Tu.

It belongs to the EF-Ts family.

It is found in the cytoplasm. Its function is as follows. Associates with the EF-Tu.GDP complex and induces the exchange of GDP to GTP. It remains bound to the aminoacyl-tRNA.EF-Tu.GTP complex up to the GTP hydrolysis stage on the ribosome. In Bacillus cytotoxicus (strain DSM 22905 / CIP 110041 / 391-98 / NVH 391-98), this protein is Elongation factor Ts.